Consider the following 388-residue polypeptide: Sulfate adenylyltransferase (388 aa).

This sequence belongs to the sulfate adenylyltransferase family.

It catalyses the reaction sulfate + ATP + H(+) = adenosine 5'-phosphosulfate + diphosphate. It functions in the pathway sulfur metabolism; hydrogen sulfide biosynthesis; sulfite from sulfate: step 1/3. This Trichodesmium erythraeum (strain IMS101) protein is Sulfate adenylyltransferase.